We begin with the raw amino-acid sequence, 1226 residues long: 3-hydroxy-3-methylglutaryl-coenzyme A reductase (1226 aa).

Transmembrane regions (helical) follow at residues 17–37 (IETIVSVFVLATLAYFHILSG), 224–244 (ILVVLTGYILMHVTFMRLFLA), 252–272 (FWLSAGIFSSATISFLFTLPM), 337–357 (VGNMILRDYALEIAVLFVGVN), and 373–393 (LLAMDRLMTFTLYTAVLTIMV). One can recognise an SSD domain in the interval 223–391 (DILVVLTGYI…FTLYTAVLTI (169 aa)). The segment at 428–449 (LSRKSSKQSVTEPETTKNLRQR) is disordered. Polar residues predominate over residues 434–445 (KQSVTEPETTKN). The helical transmembrane segment at 481–501 (LLLIASFLTLHILNFCTTLTS) threads the bilayer. Disordered regions lie at residues 683–702 (APAPAPAPEPEPPVNRPPPL) and 722–742 (LPIRSPPPVEPITPESREVEP). Residues 685-702 (APAPAPEPEPPVNRPPPL) show a composition bias toward pro residues. Residue Glu869 is the Charge relay system of the active site. Position 875 to 881 (875 to 881 (STSRGCK)) interacts with CoA. Residues 936 to 938 (SRF) and 963 to 971 (DAMGMNMIS) each bind NADP(+). The active-site Charge relay system is the Lys1001. A CoA-binding site is contributed by 1030–1032 (VLK). Asp1077 functions as the Charge relay system in the catalytic mechanism. Residues 1150–1170 (IIASAVMAGELSLISALAAGH) form a helical membrane-spanning segment. 1174–1175 (AH) lines the CoA pocket. His1175 (proton donor) is an active-site residue. Residue 1179-1180 (NR) participates in NADP(+) binding. The segment at 1182 to 1226 (QLNTPMPSRPHTPGPEDVSHVQQLPTPSASDDKGVTAQGYVVEAK) is disordered. The segment covering 1201–1210 (HVQQLPTPSA) has biased composition (polar residues).

The protein belongs to the HMG-CoA reductase family.

Its subcellular location is the endoplasmic reticulum membrane. It carries out the reaction (R)-mevalonate + 2 NADP(+) + CoA = (3S)-3-hydroxy-3-methylglutaryl-CoA + 2 NADPH + 2 H(+). The protein operates within metabolic intermediate biosynthesis; (R)-mevalonate biosynthesis; (R)-mevalonate from acetyl-CoA: step 3/3. Functionally, HMG-CoA reductase; part of the first module of ergosterol biosynthesis pathway that includes the early steps of the pathway, conserved across all eukaryotes, and which results in the formation of mevalonate from acetyl-coenzyme A (acetyl-CoA). This module also plays a key role in the biosynthesis of triterpenes such as ganoderic acids (GA), a group of highly oxygenated lanostane-type triterpenoids which are well recognized as a main group of unique bioactive compounds in the medicinal mushroom Ganoderma lucidum. In this module, the acetyl-CoA acetyltransferase catalyzes the formation of acetoacetyl-CoA. The hydroxymethylglutaryl-CoA synthase HMGS then condenses acetyl-CoA with acetoacetyl-CoA to form HMG-CoA. The rate-limiting step of the early module is the reduction to mevalonate by the 3-hydroxy-3-methylglutaryl-coenzyme A (HMG-CoA) reductase. This is 3-hydroxy-3-methylglutaryl-coenzyme A reductase from Ganoderma lucidum (Ling zhi medicinal fungus).